Reading from the N-terminus, the 350-residue chain is Biotin synthase (350 aa).

One can recognise a Radical SAM core domain in the interval 41–268 (NEVQISRLLS…KSRVRLSAGR (228 aa)). Positions 56, 60, and 63 each coordinate [4Fe-4S] cluster. [2Fe-2S] cluster contacts are provided by cysteine 100, cysteine 131, cysteine 191, and arginine 263.

Belongs to the radical SAM superfamily. Biotin synthase family. As to quaternary structure, homodimer. [4Fe-4S] cluster is required as a cofactor. The cofactor is [2Fe-2S] cluster.

The catalysed reaction is (4R,5S)-dethiobiotin + (sulfur carrier)-SH + 2 reduced [2Fe-2S]-[ferredoxin] + 2 S-adenosyl-L-methionine = (sulfur carrier)-H + biotin + 2 5'-deoxyadenosine + 2 L-methionine + 2 oxidized [2Fe-2S]-[ferredoxin]. Its pathway is cofactor biosynthesis; biotin biosynthesis; biotin from 7,8-diaminononanoate: step 2/2. Functionally, catalyzes the conversion of dethiobiotin (DTB) to biotin by the insertion of a sulfur atom into dethiobiotin via a radical-based mechanism. The polypeptide is Biotin synthase (Shewanella halifaxensis (strain HAW-EB4)).